Consider the following 435-residue polypeptide: Eukaryotic peptide chain release factor subunit 1-3 (435 aa).

At A2 the chain carries N-acetylalanine.

Belongs to the eukaryotic release factor 1 family. As to quaternary structure, heterodimer of two subunits, one of which binds GTP.

The protein resides in the cytoplasm. Functionally, directs the termination of nascent peptide synthesis (translation) in response to the termination codons UAA, UAG and UGA. Modulates plant growth and development. This Brassica oleracea var. botrytis (Cauliflower) protein is Eukaryotic peptide chain release factor subunit 1-3.